The sequence spans 113 residues: Dynein light chain Tctex-type 1 (113 aa).

Met-1 is subject to N-acetylmethionine. Residues 41 to 113 (QWTTNVLEQT…CIVSTFGLSI (73 aa)) form an interaction with GNB1 region.

It belongs to the dynein light chain Tctex-type family. Homodimer. The cytoplasmic dynein 1 complex consists of two catalytic heavy chains (HCs) and a number of non-catalytic subunits presented by intermediate chains (ICs), light intermediate chains (LICs) and light chains (LCs); the composition seems to vary in respect to the IC, LIC and LC composition. The heavy chain homodimer serves as a scaffold for the probable homodimeric assembly of the respective non-catalytic subunits. The ICs and LICs bind directly to the HC dimer and the LCs assemble on the IC dimer. DYNLT1 and DYNLT3 compete for association with dynein IC (DYNC1I1 or DYNC1I2). Self-associates. Interacts with RHO. Interacts with DYNC1I1 and DYNC1I2. Interacts with DOC2A, DOC2B and SCN10A. Interacts with PVR. Interacts with SVIL isoform 2. Interacts with GNB1; the interaction occurs in presence of guanine nucleotide-binding protein G(T) subunit gamma; the interaction diminishes the association of DYNLT1 with dynein IC (DYNC1I1 or DYNC1I2). Interacts with GNB2, GNB3 and GNB5; the interactions occur in presence of guanine nucleotide-binding protein G(T) subunit gamma. Interacts with ACVR2B and ARHGEF2. Interacts with DNAI4. Interacts with CFAP61. Post-translationally, phosphorylated by BMPR2. The phosphorylation status is proposed to regulate the association with the cytoplasmic dynein complex and may have role in cytoplasmic dynein cargo release. As to expression, high level in testis (germ cell-specific). Expressed in sperm (at protein level). 200-fold lower in liver, brain, heart, spleen, and kidney. Levels in thymus and two embryonal carcinoma cell lines were several-fold higher than this low constitutive level.

The protein localises to the golgi apparatus. Its subcellular location is the cytoplasm. It localises to the cytoskeleton. The protein resides in the spindle. Functionally, acts as one of several non-catalytic accessory components of the cytoplasmic dynein 1 complex that are thought to be involved in linking dynein to cargos and to adapter proteins that regulate dynein function. Cytoplasmic dynein 1 acts as a motor for the intracellular retrograde motility of vesicles and organelles along microtubules. Binds to transport cargos and is involved in apical cargo transport such as rhodopsin-bearing vesicles in polarized epithelia. May also be a accessory component of axonemal dynein. Plays an important role in male germ cell development and function. Candidate for involvement in male sterility. Plays a role in neuronal morphogenesis; the function is independent of cytoplasmic dynein and seems to be coupled to regulation of the actin cytoskeleton by enhancing Rac1 activity. The function in neurogenesis may be regulated by association with a G-protein beta-gamma dimer. May function as a receptor-independent activator of heterotrimeric G-protein signaling; the activation appears to be independent of a nucleotide exchange. Plays a role in regulating neurogenesis; inhibits the genesis of neurons from precursor cells during cortical development presumably by antagonizing ARHGEF2. Unrelated to the role in retrograde microtubule-associated movement may play a role in the dimerization of cytoplasmic proteins/domains such as for ACVR2B. Binds to the cytoplasmic domain of ACVR2B and, in vitro, inhibits ACVR2B signaling. Involved in the regulation of mitotic spindle orientation. The chain is Dynein light chain Tctex-type 1 (Dynlt1) from Mus musculus (Mouse).